The following is a 246-amino-acid chain: 14-3-3 protein beta/alpha (246 aa).

N-acetylmethionine is present on Met-1. Thr-2 carries the N-acetylthreonine; in 14-3-3 protein beta/alpha, N-terminally processed modification. Thr-2 carries the phosphothreonine modification. Lys-5 carries the N6-acetyllysine modification. N6-acetyllysine; alternate is present on Lys-51. Residue Lys-51 forms a Glycyl lysine isopeptide (Lys-Gly) (interchain with G-Cter in SUMO2); alternate linkage. Phosphoserine is present on Ser-60. Residue Lys-70 is modified to N6-acetyllysine. Tyr-84 and Tyr-106 each carry 3'-nitrotyrosine. At Lys-117 the chain carries N6-acetyllysine. Ser-186 and Ser-232 each carry phosphoserine.

The protein belongs to the 14-3-3 family. As to quaternary structure, homodimer. Interacts with SAMSN1 and PRKCE. Interacts with AKAP13. Interacts with SSH1 and TORC2/CRTC2. Interacts with ABL1; the interaction results in cytoplasmic location of ABL1 and inhibition of cABL-mediated apoptosis. Interacts with ROR2 (dimer); the interaction results in phosphorylation of YWHAB on tyrosine residues. Interacts with GAB2. Interacts with YAP1 (phosphorylated form). Interacts with the phosphorylated (by AKT1) form of SRPK2. Interacts with PKA-phosphorylated AANAT. Interacts with MYO1C. Interacts with SIRT2. Interacts with the 'Thr-369' phosphorylated form of DAPK2. Interacts with PI4KB, TBC1D22A and TBC1D22B. Interacts with the 'Ser-1134' and 'Ser-1161' phosphorylated form of SOS1. Interacts (via phosphorylated form) with YWHAB; this interaction occurs in a protein kinase AKT1-dependent manner. Interacts with SLITRK1. Interacts with SYNPO2 (phosphorylated form); YWHAB competes with ACTN2 for interaction with SYNPO2. Interacts with RIPOR2 (via phosphorylated form); this interaction occurs in a chemokine-dependent manner and does not compete for binding of RIPOR2 with RHOA nor blocks inhibition of RIPOR2-mediated RHOA activity. Interacts with MARK2 and MARK3. Interacts with TESK1; the interaction is dependent on the phosphorylation of TESK1 'Ser-439' and inhibits TESK1 kinase activity. Interacts with MEFV. Interacts with HDAC4. Interacts with ADAM22 (via C-terminus). The alpha, brain-specific form differs from the beta form in being phosphorylated. Phosphorylated on Ser-60 by protein kinase C delta type catalytic subunit in a sphingosine-dependent fashion.

The protein resides in the cytoplasm. The protein localises to the melanosome. Adapter protein implicated in the regulation of a large spectrum of both general and specialized signaling pathways. Binds to a large number of partners, usually by recognition of a phosphoserine or phosphothreonine motif. Binding generally results in the modulation of the activity of the binding partner. Negative regulator of osteogenesis. Blocks the nuclear translocation of the phosphorylated form (by AKT1) of SRPK2 and antagonizes its stimulatory effect on cyclin D1 expression resulting in blockage of neuronal apoptosis elicited by SRPK2. Negative regulator of signaling cascades that mediate activation of MAP kinases via AKAP13. The sequence is that of 14-3-3 protein beta/alpha (YWHAB) from Bos taurus (Bovine).